We begin with the raw amino-acid sequence, 412 residues long: MKENFNVSKLKNGLTILTYNMPYVNSVAINLIAKVGSRYENPGEEGIAHFLEHMAFKGTKTRTAKQIAEEFDSIGGHFNAYTGHEKTVYYSRVLSENCNKALAIIADIVQNSAFAEEEIAKEYQVILQEIAHAQDNPDDLVYEKFYNSVFKDQPLGKPILGTSKTIETFNRDHFLKFTGKHYNAENFYLSIAGNVDHEEIVKEAERLFSSLTQGEKSNFSPAKYIGGHSFINKDLEQTTLILGFEGTSYINLERLYQTQLLAIIFGGGMSSRLFQHIREKLGLAYAVGSYNSPYFDSGVFTIYASTAHDKLELLAAELKNEIKRMAEQVKQEEIERARTQIRSNLQMAQEKVAYKSEEIGKNYAVFGKYISPEEIMEIIMNIKAADIIQTANRIFSSSATSAVIGPNNLSGF.

Zn(2+) is bound at residue His49. Glu52 functions as the Proton acceptor in the catalytic mechanism. Zn(2+)-binding residues include His53 and Glu129.

This sequence belongs to the peptidase M16 family. Zn(2+) serves as cofactor.

This is an uncharacterized protein from Rickettsia bellii (strain RML369-C).